The sequence spans 218 residues: 25.3 kDa vesicle transport protein SEC22-1 (218 aa).

Residues 1–192 (MVKMTLIARV…DKAKDLNRQA (192 aa)) lie on the Cytoplasmic side of the membrane. A Longin domain is found at 6–120 (LIARVTDGLP…YAFIKFDTFI (115 aa)). A v-SNARE coiled-coil homology domain is found at 135–195 (NIAKLNDELY…KDLNRQALIR (61 aa)). Residues 193–213 (LIRKWAPVAIVFGVVFLLFWV) form a helical; Anchor for type IV membrane protein membrane-spanning segment. Over 214 to 218 (KNKLW) the chain is Vesicular.

It belongs to the synaptobrevin family. Interacts with SEC24A. Mainly expressed in flowers and siliques, to a lower extent in seedlings, and barely in roots and leaves.

The protein resides in the golgi apparatus membrane. Its subcellular location is the endoplasmic reticulum membrane. Its function is as follows. V-SNARE involved in vesicle trafficking from the ER to the Golgi complex and required for early secretion. Involved in endoplasmic reticulum (ER) biogenesis and functions as well as for Golgi-stack integrity. Essential for gametophytes development. Involved in cesium Cs(+) accumulation, a non-essential cation. This chain is 25.3 kDa vesicle transport protein SEC22-1, found in Arabidopsis thaliana (Mouse-ear cress).